The chain runs to 380 residues: Endopolygalacturonase AN8327 (380 aa).

A signal peptide spans 1-19 (MFYALGPLALFAFATEVMA). Residues 20 to 35 (TPVAYPMTTASPTLAK) constitute a propeptide that is removed on maturation. A disulfide bridge links Cys-39 with Cys-57. PbH1 repeat units follow at residues 147-169 (LTDS…SING), 170-200 (CDGL…DIGE), 201-222 (SSNV…AVNS), 223-243 (GTSI…SIGS), 252-273 (VDTV…RIKA), 281-303 (IKGV…LIEQ), and 315-338 (TSGI…DSDG). The active-site Proton donor is the Asp-215. The cysteines at positions 217 and 233 are disulfide-linked. The active site involves His-237. N-linked (GlcNAc...) asparagine glycosylation is present at Asn-327. Cys-345 and Cys-350 are joined by a disulfide. The N-linked (GlcNAc...) asparagine glycan is linked to Asn-352. Cys-369 and Cys-378 are oxidised to a cystine.

The protein belongs to the glycosyl hydrolase 28 family.

It localises to the secreted. It carries out the reaction (1,4-alpha-D-galacturonosyl)n+m + H2O = (1,4-alpha-D-galacturonosyl)n + (1,4-alpha-D-galacturonosyl)m.. Its function is as follows. Involved in maceration and soft-rotting of plant tissue. Hydrolyzes the 1,4-alpha glycosidic bonds of de-esterified pectate in the smooth region of the plant cell wall. The chain is Endopolygalacturonase AN8327 from Emericella nidulans (strain FGSC A4 / ATCC 38163 / CBS 112.46 / NRRL 194 / M139) (Aspergillus nidulans).